The primary structure comprises 355 residues: Histidinol-phosphate aminotransferase (355 aa).

Lys218 carries the N6-(pyridoxal phosphate)lysine modification.

This sequence belongs to the class-II pyridoxal-phosphate-dependent aminotransferase family. Histidinol-phosphate aminotransferase subfamily. Homodimer. The cofactor is pyridoxal 5'-phosphate.

It carries out the reaction L-histidinol phosphate + 2-oxoglutarate = 3-(imidazol-4-yl)-2-oxopropyl phosphate + L-glutamate. It participates in amino-acid biosynthesis; L-histidine biosynthesis; L-histidine from 5-phospho-alpha-D-ribose 1-diphosphate: step 7/9. This Chlorobium limicola (strain DSM 245 / NBRC 103803 / 6330) protein is Histidinol-phosphate aminotransferase.